Here is a 784-residue protein sequence, read N- to C-terminus: Toll-like receptor 2 (784 aa).

Residues 1 to 20 (MPRALWTAWVWAVISVFTEG) form the signal peptide. The Extracellular portion of the chain corresponds to 21–587 (ASDQASSLSC…ARLSLSECHR (567 aa)). A disulfide bridge links Cys30 with Cys36. 19 LRR repeats span residues 54-77 (VKSLDLSDNEITYVGNRDLQRCVN), 78-101 (LKTLRLGANEIHTVEEDSFFHLRN), 102-125 (LEYLDLSYNRLSNLSSSWFRSLYV), 126-150 (LKFLNLLGNLYKTLGETSLFSHLPN), 151-175 (LRTLKVGNSNSFTQIHEKDFTGLTF), 176-199 (LEELEISAQNLQLYVPKSLKSIQN), 200-223 (ISHLILHLRQPVLLLDILIDIVSS), 224-250 (LDYLELRDTNLHTFYFSEASISEINTS), 251-278 (VKKLTFRNVQFTDDSFVEVVKLFNYVSG), 279-308 (ILEVEFDDCTHDGVGDFTALTLNRIRYLGN), 309-337 (VETLTIRKLHIPQFFLFYDLSSIYPLTGK), 338-361 (VKRVTIENSKVFLVPCLLSQHLKS), 362-388 (LEYLDLSENLMSEETLKNSACEHAWPV), 389-414 (LQTLVLRQNRLKSLEKTGELLLTLKN), 415-437 (LNNLDISKNNFLSMPETCQWPGK), 438-457 (MKQLNLSSTRIHSLTQCLPQ), 458-478 (TLEILDVSNNNLDSFSLILPQ), 479-500 (LKELYISRNKLKTLPDASFLPV), and 501-524 (LSVMRISGNIINTFSKEQLDSFPQ). Asn114 carries an N-linked (GlcNAc...) asparagine glycan. N-linked (GlcNAc...) asparagine glycosylation occurs at Asn199. The N-linked (GlcNAc...) asparagine glycan is linked to Asn248. A disulfide bridge links Cys353 with Cys382. Cys432 and Cys454 form a disulfide bridge. Asn442 carries an N-linked (GlcNAc...) asparagine glycan. Positions 525–579 (LKALEAGGNNFICSCDFLSFAQGQQALARVLVDWPDGYRCDAPSHVRGQRVQDAR) constitute an LRRCT domain. Residues 588 to 608 (AAVVSAVCCALFLLLLLTGVL) form a helical membrane-spanning segment. Residues 609–784 (CHRFHGLWYM…WLNLRAAIRS (176 aa)) lie on the Cytoplasmic side of the membrane. One can recognise a TIR domain in the interval 639-782 (LCYDAFVSYS…AFWLNLRAAI (144 aa)). Lys754 is covalently cross-linked (Glycyl lysine isopeptide (Lys-Gly) (interchain with G-Cter in ubiquitin)). Residues 761–778 (YLEWPTDETHREAFWLNL) carry the ATG16L1-binding motif motif.

The protein belongs to the Toll-like receptor family. In terms of assembly, interacts with LY96, TLR1 and TLR6 (via extracellular domain). TLR2 seems to exist in heterodimers with either TLR1 or TLR6 before stimulation by the ligand. The heterodimers form bigger oligomers in response to their corresponding ligands as well as further heterotypic associations with other receptors such as CD14 and/or CD36. Binds MYD88 (via TIR domain). Interacts with TICAM1. Interacts with CNPY3. Interacts with ATG16L1. Interacts with PPP1R11. Interacts with TICAM2. Interacts with TIRAP. Post-translationally, ubiquitinated at Lys-754 by PPP1R11, leading to its degradation. Deubiquitinated by USP2. In terms of processing, glycosylation of Asn-442 is critical for secretion of the N-terminal ectodomain of TLR2.

It localises to the membrane. Its subcellular location is the cytoplasmic vesicle. The protein resides in the phagosome membrane. The protein localises to the membrane raft. In terms of biological role, cooperates with LY96 to mediate the innate immune response to bacterial lipoproteins and other microbial cell wall components. Cooperates with TLR1 or TLR6 to mediate the innate immune response to bacterial lipoproteins or lipopeptides. Acts via MYD88 and TRAF6, leading to NF-kappa-B activation, cytokine secretion and the inflammatory response. May also promote apoptosis in response to lipoproteins. Forms activation clusters composed of several receptors depending on the ligand, these clusters trigger signaling from the cell surface and subsequently are targeted to the Golgi in a lipid-raft dependent pathway. Forms the cluster TLR2:TLR6:CD14:CD36 in response to diacylated lipopeptides and TLR2:TLR1:CD14 in response to triacylated lipopeptides. This is Toll-like receptor 2 (TLR2) from Ovis aries (Sheep).